The chain runs to 201 residues: dITP/XTP pyrophosphatase (201 aa).

9–14 (SNNAGK) lines the substrate pocket. Mg(2+) contacts are provided by Glu41 and Asp70. Asp70 serves as the catalytic Proton acceptor. Substrate-binding positions include Ser71, 155–158 (FGYD), Lys178, and 183–184 (HR).

It belongs to the HAM1 NTPase family. Homodimer. The cofactor is Mg(2+).

The enzyme catalyses XTP + H2O = XMP + diphosphate + H(+). It catalyses the reaction dITP + H2O = dIMP + diphosphate + H(+). The catalysed reaction is ITP + H2O = IMP + diphosphate + H(+). Its function is as follows. Pyrophosphatase that catalyzes the hydrolysis of nucleoside triphosphates to their monophosphate derivatives, with a high preference for the non-canonical purine nucleotides XTP (xanthosine triphosphate), dITP (deoxyinosine triphosphate) and ITP. Seems to function as a house-cleaning enzyme that removes non-canonical purine nucleotides from the nucleotide pool, thus preventing their incorporation into DNA/RNA and avoiding chromosomal lesions. This chain is dITP/XTP pyrophosphatase, found in Methylococcus capsulatus (strain ATCC 33009 / NCIMB 11132 / Bath).